A 93-amino-acid polypeptide reads, in one-letter code: Integration host factor subunit beta (93 aa).

The protein belongs to the bacterial histone-like protein family. As to quaternary structure, heterodimer of an alpha and a beta chain.

Functionally, this protein is one of the two subunits of integration host factor, a specific DNA-binding protein that functions in genetic recombination as well as in transcriptional and translational control. In Rhodospirillum centenum (strain ATCC 51521 / SW), this protein is Integration host factor subunit beta.